Consider the following 216-residue polypeptide: Histone doublet H4-H3 (216 aa).

Positions 1 to 12 (MSKAGKKVKAQQ) are enriched in basic residues. Residues 1 to 23 (MSKAGKKVKAQQHGHLADHVSVG) form a disordered region.

The protein resides in the host nucleus. It is found in the host cytoplasm. The protein localises to the virion. Its function is as follows. Histone-like protein that is recruited to viral factories during viral replication and participates in viral DNA packaging and virion production probably by forming unstable nucleosome-like particles. May compact the viral DNA. The sequence is that of Histone doublet H4-H3 from Melbournevirus (MelV).